Reading from the N-terminus, the 422-residue chain is Probable alpha-1,6-mannosyltransferase MNN11 (422 aa).

Topologically, residues 1–31 (MAIKPRTKGKTYSSRSVGSQWFNRLGFKQNK) are cytoplasmic. A helical; Signal-anchor for type II membrane protein transmembrane segment spans residues 32–52 (YGTCKFLSIITAFVFILYFFS). Residues 53-422 (NRFYPISRSA…GHMYQKIKKS (370 aa)) lie on the Lumenal side of the membrane.

The protein belongs to the glycosyltransferase 34 family. As to quaternary structure, component of the M-Pol II complex composed of ANP1, MNN9, MNN10, MNN11 and HOC1.

The protein resides in the golgi apparatus. It localises to the cis-Golgi network membrane. Functionally, required for synthesis of full-length mannan chains. The M-Pol II complex possesses alpha-1,6-mannosyltransferase activity and is probably involved in the elongation of the mannan backbone of N-linked glycans on cell wall and periplasmic proteins. The polypeptide is Probable alpha-1,6-mannosyltransferase MNN11 (MNN11) (Saccharomyces cerevisiae (strain ATCC 204508 / S288c) (Baker's yeast)).